The chain runs to 506 residues: Cobyric acid synthase (506 aa).

In terms of domain architecture, GATase cobBQ-type spans 260 to 453; the sequence is KVGVAAIYFP…FHGIFNEPAV (194 aa). Catalysis depends on Cys341, which acts as the Nucleophile. The active site involves His445.

It belongs to the CobB/CobQ family. CobQ subfamily.

It participates in cofactor biosynthesis; adenosylcobalamin biosynthesis. In terms of biological role, catalyzes amidations at positions B, D, E, and G on adenosylcobyrinic A,C-diamide. NH(2) groups are provided by glutamine, and one molecule of ATP is hydrogenolyzed for each amidation. This chain is Cobyric acid synthase, found in Chlorobium chlorochromatii (strain CaD3).